The sequence spans 225 residues: Germin-like protein 8-3 (225 aa).

An N-terminal signal peptide occupies residues 1–23; it reads MASSSLFLLASLLVLASWQQAIA. Cys-33 and Cys-48 form a disulfide bridge. Asn-53 and Asn-78 each carry an N-linked (GlcNAc...) asparagine glycan. The Cupin type-1 domain maps to 60 to 213; that stretch reads FNAAKFDMPR…AFQVEKKVID (154 aa). Residues His-111, His-113, Glu-118, and His-158 each contribute to the Mn(2+) site.

The protein belongs to the germin family. As to quaternary structure, oligomer (believed to be a pentamer but probably hexamer).

It localises to the secreted. Its subcellular location is the extracellular space. The protein resides in the apoplast. Functionally, plays a role in broad-spectrum disease resistance. Probably has no oxalate oxidase activity even if the active site is conserved. This is Germin-like protein 8-3 (GER2) from Oryza sativa subsp. japonica (Rice).